A 208-amino-acid chain; its full sequence is Uracil phosphoribosyltransferase (208 aa).

5-phospho-alpha-D-ribose 1-diphosphate contacts are provided by residues Arg-78, Arg-103, and 130–138 (DPMLATGGS). Uracil is bound by residues Ile-193 and 198–200 (GDA). Asp-199 contacts 5-phospho-alpha-D-ribose 1-diphosphate.

It belongs to the UPRTase family. Requires Mg(2+) as cofactor.

The catalysed reaction is UMP + diphosphate = 5-phospho-alpha-D-ribose 1-diphosphate + uracil. It participates in pyrimidine metabolism; UMP biosynthesis via salvage pathway; UMP from uracil: step 1/1. Its activity is regulated as follows. Allosterically activated by GTP. Functionally, catalyzes the conversion of uracil and 5-phospho-alpha-D-ribose 1-diphosphate (PRPP) to UMP and diphosphate. The sequence is that of Uracil phosphoribosyltransferase from Pectobacterium carotovorum subsp. carotovorum (strain PC1).